A 56-amino-acid polypeptide reads, in one-letter code: Large ribosomal subunit protein eL37 (56 aa).

Zn(2+) is bound by residues cysteine 19, cysteine 22, cysteine 34, and cysteine 37. A C4-type zinc finger spans residues 19–37 (CRRCGRLSYNFNRKTCVAC).

The protein belongs to the eukaryotic ribosomal protein eL37 family. Requires Zn(2+) as cofactor.

Functionally, binds to the 23S rRNA. The polypeptide is Large ribosomal subunit protein eL37 (Methanothrix thermoacetophila (strain DSM 6194 / JCM 14653 / NBRC 101360 / PT) (Methanosaeta thermophila)).